The following is a 435-amino-acid chain: uncharacterized protein (435 aa).

9 helical membrane-spanning segments follow: residues 40 to 60 (LVST…EAVF), 103 to 123 (VLWT…WLIL), 133 to 153 (IMLA…IYNP), 195 to 215 (LIHE…IIVL), 226 to 246 (ICTA…AVVG), 313 to 333 (VAVV…LFFV), 358 to 378 (LALP…AVDW), 381 to 401 (WWVM…IDRP), and 414 to 434 (VFVC…NNIG).

It localises to the cell membrane. This is an uncharacterized protein from Mycobacterium bovis (strain ATCC BAA-935 / AF2122/97).